A 478-amino-acid chain; its full sequence is tRNA-2-methylthio-N(6)-dimethylallyladenosine synthase (478 aa).

One can recognise an MTTase N-terminal domain in the interval 39–157 (KLVFTQTFGC…FPQLLTESIN (119 aa)). [4Fe-4S] cluster is bound by residues cysteine 48, cysteine 84, cysteine 118, cysteine 194, cysteine 198, and cysteine 201. The Radical SAM core domain maps to 180 to 410 (RKFELKAFVN…LEAVNRISAE (231 aa)). The 68-residue stretch at 410–477 (EINDGYKDRI…TFSLNGILVN (68 aa)) folds into the TRAM domain.

Belongs to the methylthiotransferase family. MiaB subfamily. In terms of assembly, monomer. Requires [4Fe-4S] cluster as cofactor.

The protein localises to the cytoplasm. It catalyses the reaction N(6)-dimethylallyladenosine(37) in tRNA + (sulfur carrier)-SH + AH2 + 2 S-adenosyl-L-methionine = 2-methylsulfanyl-N(6)-dimethylallyladenosine(37) in tRNA + (sulfur carrier)-H + 5'-deoxyadenosine + L-methionine + A + S-adenosyl-L-homocysteine + 2 H(+). Its function is as follows. Catalyzes the methylthiolation of N6-(dimethylallyl)adenosine (i(6)A), leading to the formation of 2-methylthio-N6-(dimethylallyl)adenosine (ms(2)i(6)A) at position 37 in tRNAs that read codons beginning with uridine. The polypeptide is tRNA-2-methylthio-N(6)-dimethylallyladenosine synthase (Clostridioides difficile (strain 630) (Peptoclostridium difficile)).